Consider the following 310-residue polypeptide: MVKVYAPASSANMSVGFDVLGAAVTPVDGALLGDVVTVESAETFSLNNLGRFADKLPSEPRENIVYQCWERFCQELGKQIPVAMTLEKNMPIGSGLGSSACSVVAALMAMNEHCGKPLNDTRLLALMGELEGRISGSIHYDNVAPCFLGGMQLMIEENDIISQQVPGFDEWLWVLAYPGIKVSTAEARAILPAQYRRQDCIAHGRHLAGFIHACYSRQPELAAKLMKDVIAEPYRERLLPGFRQARQAVAEIGAVASGISGSGPTLFALCDKPDTAQRVADWLGKNYLQNQEGFVHICRLDTAGARVLEN.

91 to 101 (PIGSGLGSSAC) serves as a coordination point for ATP.

Belongs to the GHMP kinase family. Homoserine kinase subfamily.

The protein localises to the cytoplasm. The catalysed reaction is L-homoserine + ATP = O-phospho-L-homoserine + ADP + H(+). It participates in amino-acid biosynthesis; L-threonine biosynthesis; L-threonine from L-aspartate: step 4/5. Catalyzes the ATP-dependent phosphorylation of L-homoserine to L-homoserine phosphate. This is Homoserine kinase from Escherichia coli O157:H7.